The primary structure comprises 2122 residues: Pecanex-like protein 2 (2122 aa).

A run of 2 helical transmembrane segments spans residues 36-53 and 60-82; these read LYLWLFLLLLPLALHLAF and ALFYCGSVTIFFAVIKLISYRLH. Disordered regions lie at residues 92–164 and 180–250; these read QHRS…ELPA and QPEA…LVNP. Polar residues-rich tracts occupy residues 146 to 157 and 185 to 203; these read SRGQSVHSQHSS and ASSTSPGMKSESLPASQGR. An N-linked (GlcNAc...) asparagine glycan is attached at Asn288. Composition is skewed to low complexity over residues 392 to 407 and 458 to 476; these read VTSSDRTSVRSSAESA and PDRCSGSGPGDGSPTPGST. Disordered regions lie at residues 392 to 556 and 575 to 634; these read VTSS…QIPN and VVAP…PVFT. Basic and acidic residues predominate over residues 528–538; that stretch reads STKEVVSDGEK. N-linked (GlcNAc...) asparagine glycosylation is present at Asn556. A compositionally biased stretch (basic and acidic residues) spans 599-618; sequence TKEEAVENEKPNGRDPKPGK. Residues 625–634 show a composition bias toward polar residues; it reads DPANGSPVFT. A run of 13 helical transmembrane segments spans residues 825 to 845, 849 to 869, 882 to 902, 933 to 953, 976 to 998, 1010 to 1030, 1080 to 1100, 1105 to 1125, 1174 to 1194, 1218 to 1238, 1245 to 1265, 1270 to 1290, and 1305 to 1325; these read VAVLLSVLVSLLGFLTLNRGF, LWVLLFCLVMASCQYSLLKSV, QIIAYSRPIYFCMLCSLILLL, HLIVFLCCFPAISLLGLFPQI, GITSAVYSVGRSVLAAALLHAFC, HIPALFSAFCGLLVALSYHLS, LVICSAAAVLSFAVSASTVFL, FLSIVLFALAGTVGLITHHLL, YLLYPAIVLNALTLDAFSISN, SFCNPVHQFANLGFTVIFFHF, ESFLLDFFMVSIVFTKLGDLL, FVLAYVAPWQMAWGSSFHVFA, and TFATSIFSTPLSPFLGSVIFI. Asn1393, Asn1534, and Asn1802 each carry an N-linked (GlcNAc...) asparagine glycan. Disordered stretches follow at residues 1858–1943 and 1955–1991; these read SVGQ…SSGP and STSVHELAQRPSGSRLSLHTSAASLHSQPPPVTTTGH. Residues 1888–1898 are compositionally biased toward basic and acidic residues; sequence ESRDGSTEQPR. Residues 1922-1942 show a composition bias toward polar residues; the sequence is SQSVQAHSAISQRPPTLSSSG. A compositionally biased stretch (low complexity) spans 1968 to 1981; sequence SRLSLHTSAASLHS. N-linked (GlcNAc...) asparagine glycosylation is present at Asn2039. The tract at residues 2097–2122 is disordered; sequence VLCRRASQEDMGLDDTASQQSTSDEQ. The span at 2112 to 2122 shows a compositional bias: polar residues; it reads TASQQSTSDEQ.

The protein belongs to the pecanex family.

The protein localises to the membrane. Its function is as follows. May play a role in tumorigenesis. This is Pecanex-like protein 2 from Mus musculus (Mouse).